Reading from the N-terminus, the 428-residue chain is Adenylosuccinate synthetase (428 aa).

GTP contacts are provided by residues 12 to 18 (GDEGKGK) and 40 to 42 (GHT). Asp-13 acts as the Proton acceptor in catalysis. Positions 13 and 40 each coordinate Mg(2+). IMP contacts are provided by residues 13–16 (DEGK), 38–41 (NAGH), Thr-130, Arg-144, Gln-225, Thr-240, and Arg-304. The active-site Proton donor is the His-41. 300 to 306 (VTTGRSR) is a binding site for substrate. Residues Arg-306, 332 to 334 (KID), and 414 to 416 (GVG) contribute to the GTP site.

Belongs to the adenylosuccinate synthetase family. As to quaternary structure, homodimer. Mg(2+) serves as cofactor.

It localises to the cytoplasm. The enzyme catalyses IMP + L-aspartate + GTP = N(6)-(1,2-dicarboxyethyl)-AMP + GDP + phosphate + 2 H(+). The protein operates within purine metabolism; AMP biosynthesis via de novo pathway; AMP from IMP: step 1/2. In terms of biological role, plays an important role in the de novo pathway of purine nucleotide biosynthesis. Catalyzes the first committed step in the biosynthesis of AMP from IMP. The sequence is that of Adenylosuccinate synthetase from Clostridium botulinum (strain Eklund 17B / Type B).